Reading from the N-terminus, the 546-residue chain is Probable malate:quinone oxidoreductase (546 aa).

It belongs to the MQO family. FAD is required as a cofactor.

It carries out the reaction (S)-malate + a quinone = a quinol + oxaloacetate. It functions in the pathway carbohydrate metabolism; tricarboxylic acid cycle; oxaloacetate from (S)-malate (quinone route): step 1/1. In Acinetobacter baumannii (strain ACICU), this protein is Probable malate:quinone oxidoreductase.